The primary structure comprises 287 residues: Lipoyl synthase (287 aa).

[4Fe-4S] cluster is bound by residues cysteine 34, cysteine 39, cysteine 45, cysteine 60, cysteine 64, cysteine 67, and serine 273. The region spanning 46–262 (WNKRHATVMI…KYIAYSKGFL (217 aa)) is the Radical SAM core domain.

Belongs to the radical SAM superfamily. Lipoyl synthase family. It depends on [4Fe-4S] cluster as a cofactor.

It is found in the cytoplasm. The enzyme catalyses [[Fe-S] cluster scaffold protein carrying a second [4Fe-4S](2+) cluster] + N(6)-octanoyl-L-lysyl-[protein] + 2 oxidized [2Fe-2S]-[ferredoxin] + 2 S-adenosyl-L-methionine + 4 H(+) = [[Fe-S] cluster scaffold protein] + N(6)-[(R)-dihydrolipoyl]-L-lysyl-[protein] + 4 Fe(3+) + 2 hydrogen sulfide + 2 5'-deoxyadenosine + 2 L-methionine + 2 reduced [2Fe-2S]-[ferredoxin]. It functions in the pathway protein modification; protein lipoylation via endogenous pathway; protein N(6)-(lipoyl)lysine from octanoyl-[acyl-carrier-protein]: step 2/2. Its function is as follows. Catalyzes the radical-mediated insertion of two sulfur atoms into the C-6 and C-8 positions of the octanoyl moiety bound to the lipoyl domains of lipoate-dependent enzymes, thereby converting the octanoylated domains into lipoylated derivatives. The chain is Lipoyl synthase from Wolbachia sp. subsp. Drosophila simulans (strain wRi).